Consider the following 232-residue polypeptide: Ribonuclease P protein component 3 (232 aa).

Belongs to the eukaryotic/archaeal RNase P protein component 3 family. In terms of assembly, consists of a catalytic RNA component and at least 4-5 protein subunits.

Its subcellular location is the cytoplasm. The enzyme catalyses Endonucleolytic cleavage of RNA, removing 5'-extranucleotides from tRNA precursor.. In terms of biological role, part of ribonuclease P, a protein complex that generates mature tRNA molecules by cleaving their 5'-ends. The protein is Ribonuclease P protein component 3 of Methanococcus maripaludis (strain C6 / ATCC BAA-1332).